Here is a 405-residue protein sequence, read N- to C-terminus: ATP-sensitive inward rectifier potassium channel 15 (405 aa).

The Cytoplasmic portion of the chain corresponds to 1–90; that stretch reads MVARWVKGSE…LQDLWTTVID (90 aa). A helical membrane pass occupies residues 91–117; that stretch reads MKWRYKLTLFAATFVMTWFLFGVVYYA. Over 118-143 the chain is Extracellular; the sequence is IAFIHGDLELGESNSNHTPCIMKVDS. Residues 144 to 160 constitute an intramembrane region (helical; Pore-forming); it reads LTGAFLFSLESQTTIGY. The Selectivity filter motif lies at 157–162; sequence TIGYGV. The Extracellular portion of the chain corresponds to 161–169; the sequence is GVRSITEEC. A helical transmembrane segment spans residues 170–195; the sequence is PHAIFLLVAQLVITTLIEIFITGTFL. Over 196–405 the chain is Cytoplasmic; the sequence is AKIARPKKRA…RSLLLQQSNV (210 aa).

Belongs to the inward rectifier-type potassium channel (TC 1.A.2.1) family. KCNJ15 subfamily. In terms of assembly, can form heteromultimeric channels with Kir5.1/KCNJ16. Interacts with PATJ.

Its subcellular location is the membrane. The protein localises to the cell membrane. The catalysed reaction is K(+)(in) = K(+)(out). Channel activity is regulated by variations of cytosolic pH; reversibly inhibited by acidic pH values. Inhibited by Ba(2+) and Cs(+) in a voltage-dependent manner. Its function is as follows. Inward rectifier potassium channels are characterized by a greater tendency to allow potassium to flow into the cell rather than out of it. Their voltage dependence is regulated by the concentration of extracellular potassium; as external potassium is raised, the voltage range of the channel opening shifts to more positive voltages. The inward rectification is mainly due to the blockage of outward current by internal magnesium. The chain is ATP-sensitive inward rectifier potassium channel 15 (Kcnj15) from Rattus norvegicus (Rat).